We begin with the raw amino-acid sequence, 487 residues long: DNA-dependent metalloprotease SPRTN (487 aa).

N-acetylmethionine is present on M1. The region spanning 45–212 is the SprT-like domain; the sequence is LQGLFVLFND…KTCGGTYIKI (168 aa). H111 is a binding site for Zn(2+). The active site involves E112. H115 and H130 together coordinate Zn(2+). Residues 219-248 form a disordered region; it reads SKKGKGKTKLRKQPVSEAENKDKPNRGEKQ. Residues 220-230 show a composition bias toward basic residues; sequence KKGKGKTKLRK. At K230 the chain carries N6-acetyllysine. The span at 236–247 shows a compositional bias: basic and acidic residues; sequence AENKDKPNRGEK. Positions 253 to 261 match the SHP-box motif; that stretch reads FTGKGYVLG. Position 267 is a phosphoserine (S267). The span at 280 to 289 shows a compositional bias: polar residues; that stretch reads SQEPLSQDHS. Residues 280-317 form a disordered region; it reads SQEPLSQDHSANALRPHSKTEVKFEQNGPSKKTSVASP. K302 participates in a covalent cross-link: Glycyl lysine isopeptide (Lys-Gly) (interchain with G-Cter in SUMO2). Positions 306 to 317 are enriched in polar residues; the sequence is NGPSKKTSVASP. A PIP-box motif is present at residues 324 to 331; it reads QNVLSNYF. K340 participates in a covalent cross-link: Glycyl lysine isopeptide (Lys-Gly) (interchain with G-Cter in SUMO2); alternate. A Glycyl lysine isopeptide (Lys-Gly) (interchain with G-Cter in ubiquitin); alternate cross-link involves residue K340. A disordered region spans residues 347–379; sequence GSPVKSLTVGDSTTKSVSAGSQRRVTSSRTSLR. At S373 the chain carries Phosphoserine. The Nuclear localization signal signature appears at 401-412; that stretch reads GKLPSKRPRIED. A Glycyl lysine isopeptide (Lys-Gly) (interchain with G-Cter in ubiquitin) cross-link involves residue K413. Glycyl lysine isopeptide (Lys-Gly) (interchain with G-Cter in SUMO2) cross-links involve residues K422 and K423. The interval 427 to 455 is disordered; sequence QSGGGDVTSSSHPPAAAQSPSGASGQSRV. Residues 435-453 are compositionally biased toward low complexity; sequence SSSHPPAAAQSPSGASGQS. The UBZ4-type zinc finger occupies 455–482; it reads VVHCPVCQDEVSETQINEHLDWCLERDS. Zn(2+) contacts are provided by C458, C461, H473, and C477. K486 is covalently cross-linked (Glycyl lysine isopeptide (Lys-Gly) (interchain with G-Cter in SUMO2)).

This sequence belongs to the Spartan family. As to quaternary structure, homodimer. Interacts (VIA PIP-box) with PCNA (when ubiquitinated). Interacts (via its SHP-box) with VCP/p97. Interacts with RAD18. Interacts with KCTD13 and POLD3. Zn(2+) is required as a cofactor. Post-translationally, autocatalytically cleaved in response to double-stranded DNA-binding: autocatalytic cleavage takes place in trans and leads to inactivation. Monoubiquitinated; monoubiquitination promotes exclusion from chromatin. Deubiquitinated by VCPIP1: deubiquitination is required for subsequent acetylation and recruitment to chromatin and DNA damage sites. In terms of processing, acetylated following deubiquitination by VCPIP1, leading to recruitment to chromatin and DNA damage sites. Post-translationally, phosphorylation by CHEK1 promotes recruitment to chromatin.

It localises to the nucleus. It is found in the chromosome. DNA-binding activates the protease activity: single-stranded DNA-binding specifically activates ability to cleave covalent DNA-protein cross-links (DPCs). In contrast, double-stranded DNA-binding specifically activates autocatalytic cleavage, and subsequent inactivation. Functionally, DNA-dependent metalloendopeptidase that mediates the proteolytic cleavage of covalent DNA-protein cross-links (DPCs) during DNA synthesis, thereby playing a key role in maintaining genomic integrity. DPCs are highly toxic DNA lesions that interfere with essential chromatin transactions, such as replication and transcription, and which are induced by reactive agents, such as UV light or formaldehyde. Associates with the DNA replication machinery and specifically removes DPCs during DNA synthesis. Catalyzes proteolytic cleavage of the HMCES DNA-protein cross-link following unfolding by the BRIP1/FANCJ helicase. Acts as a pleiotropic protease for DNA-binding proteins cross-linked with DNA, such as TOP1, TOP2A, histones H3 and H4. Mediates degradation of DPCs that are not ubiquitinated, while it is not able to degrade ubiquitinated DPCs. SPRTN activation requires polymerase collision with DPCs followed by helicase bypass of DPCs. Involved in recruitment of VCP/p97 to sites of DNA damage. Also acts as an activator of CHEK1 during normal DNA replication by mediating proteolytic cleavage of CHEK1, thereby promoting CHEK1 removal from chromatin and subsequent activation. Does not activate CHEK1 in response to DNA damage. May also act as a 'reader' of ubiquitinated PCNA: recruited to sites of UV damage and interacts with ubiquitinated PCNA and RAD18, the E3 ubiquitin ligase that monoubiquitinates PCNA. Facilitates chromatin association of RAD18 and is required for efficient PCNA monoubiquitination, promoting a feed-forward loop to enhance PCNA ubiquitination and translesion DNA synthesis. In Bos taurus (Bovine), this protein is DNA-dependent metalloprotease SPRTN.